A 228-amino-acid polypeptide reads, in one-letter code: Large ribosomal subunit protein bL25 (228 aa).

Residues 1-10 (MNSLDANTRN) are compositionally biased toward polar residues. 2 disordered regions span residues 1–20 (MNSLDANTRNTKSKGDVRSL) and 187–228 (MKEP…EEKK). The span at 202–228 (EDGKEAAPAAEGDKKDDGEKKATEEKK) shows a compositional bias: basic and acidic residues.

Belongs to the bacterial ribosomal protein bL25 family. CTC subfamily. Part of the 50S ribosomal subunit; part of the 5S rRNA/L5/L18/L25 subcomplex. Contacts the 5S rRNA. Binds to the 5S rRNA independently of L5 and L18.

Functionally, this is one of the proteins that binds to the 5S RNA in the ribosome where it forms part of the central protuberance. The polypeptide is Large ribosomal subunit protein bL25 (Pelagibacter ubique (strain HTCC1062)).